Here is a 412-residue protein sequence, read N- to C-terminus: Phytoene synthase 1, chloroplastic (412 aa).

The transit peptide at 1-129 (MSVALLWVVS…AYDRCGEVCA (129 aa)) directs the protein to the chloroplast.

This sequence belongs to the phytoene/squalene synthase family. As to quaternary structure, monomer. Interacts with SGR1.

The protein resides in the plastid. The protein localises to the chloroplast. The catalysed reaction is 2 (2E,6E,10E)-geranylgeranyl diphosphate = 15-cis-phytoene + 2 diphosphate. The protein operates within carotenoid biosynthesis; phytoene biosynthesis; all-trans-phytoene from geranylgeranyl diphosphate: step 1/1. Functionally, catalyzes the reaction from prephytoene diphosphate to phytoene. The polypeptide is Phytoene synthase 1, chloroplastic (PSY1) (Solanum lycopersicum (Tomato)).